Consider the following 5142-residue polypeptide: Protein piccolo (5142 aa).

The segment covering 1 to 21 (MGNEASLEGEGLPEGLAAAAA) has biased composition (low complexity). 2 disordered regions span residues 1 to 154 (MGNE…SMMP) and 177 to 583 (DLIS…PSQG). Basic and acidic residues-rich tracts occupy residues 114–125 (RTTDTFRSEQKL), 136–150 (KESK…EHKS), and 188–202 (ETTK…EQGK). The span at 232–244 (QDGTPKSISSQQP) shows a compositional bias: polar residues. 2 stretches are compositionally biased toward pro residues: residues 298–317 (LPSP…PPAQ) and 352–371 (PVQP…PAKP). Residues 376 to 385 (TGSEKPSSEQ) show a composition bias toward polar residues. Residues 397-555 (VGKTPAQQPG…PAKPSAQQST (159 aa)) are 10 X 10 AA tandem approximate repeats of P-A-K-P-Q-P-Q-Q-P-X. Residues 467 to 493 (TKPPSQLPGPAKPPPQQPGPAKPPPQQ) show a composition bias toward pro residues. Positions 494–506 (PGSAKPPSQQPGS) are enriched in low complexity. Positions 507-522 (TKPPPQQPGPAKPSPQ) are enriched in pro residues. Residues 523 to 554 (QPGSTKPPSQQPGSAKPSAQQPSPAKPSAQQS) show a composition bias toward low complexity. The C4-type zinc-finger motif lies at 589-613 (CPLCNTTELLLHVPEKANFNTCTEC). 2 disordered regions span residues 650–929 (LAPV…TVTG) and 945–1058 (LIST…PEST). A compositionally biased stretch (low complexity) spans 673–683 (SKSSPQPQQTS). Composition is skewed to basic and acidic residues over residues 684 to 702 (PKKD…EPKK) and 743 to 755 (EQDK…DKPK). Residues 765-774 (DLVSSSSATT) are compositionally biased toward polar residues. Residues 841 to 857 (KGQKQVDPVQKKEEPKK) show a composition bias toward basic and acidic residues. Positions 873–882 (KGSPTPPGPR) are enriched in pro residues. The segment covering 889 to 927 (VPTPQQSPKPQEQSRRFSLNLGSITDAPKSQPTTPQETV) has biased composition (polar residues). Residues Ser-906 and Ser-918 each carry the phosphoserine modification. Phosphothreonine is present on Thr-922. Over residues 949–969 (AGQPGPHSQSGPGAPMKQAPA) the composition is skewed to low complexity. Composition is skewed to basic and acidic residues over residues 996-1012 (VKKE…EPKA) and 1019-1034 (KRTE…KDSK). A C4-type zinc finger spans residues 1059–1082 (CPLCKTELNIGSKDPPNFNTCTEC). Disordered regions lie at residues 1120–1163 (GDIR…QEQE), 1183–1386 (EKIP…TDEK), 1391–1410 (GLKK…SDLA), and 1423–1868 (QAST…SDPE). The span at 1126 to 1139 (PPAPSGPKASPMPV) shows a compositional bias: pro residues. 3 stretches are compositionally biased toward basic and acidic residues: residues 1193-1265 (QKQE…HDLL), 1307-1318 (PKEDDKTTKTIK), and 1330-1347 (DQVE…DKSD). The span at 1348–1358 (TSSSQQPKSPQ) shows a compositional bias: low complexity. Ser-1356, Ser-1366, Ser-1367, Ser-1396, Ser-1398, Ser-1401, Ser-1402, and Ser-1405 each carry phosphoserine. Polar residues predominate over residues 1359–1374 (GLSDTGYSSDGISSSL). Positions 1398–1407 (SQESSPSSPS) are enriched in low complexity. 2 stretches are compositionally biased toward basic and acidic residues: residues 1428–1451 (ADEK…DQEK) and 1469–1510 (KESQ…REPY). Phosphoserine is present on residues Ser-1516, Ser-1517, Ser-1519, Ser-1522, Ser-1546, Ser-1549, Ser-1570, and Ser-1572. Positions 1564–1576 (SADEDASGSEDDE) are enriched in acidic residues. Thr-1617 carries the post-translational modification Phosphothreonine. Residues Ser-1618, Ser-1628, and Ser-1640 each carry the phosphoserine modification. The span at 1631–1640 (DEDDEAFDES) shows a compositional bias: acidic residues. Over residues 1641–1652 (PELKYRETKSQE) the composition is skewed to basic and acidic residues. The span at 1671 to 1689 (ELNSTIADKYSAESSQKKT) shows a compositional bias: polar residues. Over residues 1693 to 1703 (FDEEPELEMES) the composition is skewed to acidic residues. Position 1703 is a phosphoserine (Ser-1703). Thr-1705 is subject to Phosphothreonine. Phosphoserine occurs at positions 1707 and 1712. The segment covering 1715–1732 (EGSSSLHASSFTPGTSPT) has biased composition (polar residues). A compositionally biased stretch (acidic residues) spans 1772–1785 (DSSEEEELREEEEL). Ser-1773 and Ser-1774 each carry phosphoserine. The span at 1786-1799 (LKEQEKQREIEQQQ) shows a compositional bias: basic and acidic residues. Thr-1825 bears the Phosphothreonine mark. Ser-1831 bears the Phosphoserine mark. Residues 1840 to 1855 (EELRQAAEMEELHRSS) show a composition bias toward basic and acidic residues. Residues Ser-1860, Ser-1865, Ser-1873, and Ser-1894 each carry the phosphoserine modification. Disordered regions lie at residues 2169 to 2192 (PSES…SSVC), 2365 to 2438 (ETFG…PTIL), and 2504 to 2536 (EPSK…PTGL). Composition is skewed to low complexity over residues 2174 to 2192 (TSVP…SSVC) and 2374 to 2387 (SQLP…SSLP). Composition is skewed to pro residues over residues 2404 to 2433 (QPPP…PTSP) and 2506 to 2517 (SKPPIAPKPVIP). Ser-2562 carries the phosphoserine modification. Thr-3069 bears the Phosphothreonine mark. 2 disordered regions span residues 3407 to 3508 (EKQP…DKTK) and 3558 to 3626 (KTYK…LYSP). Residues 3432–3441 (DDPRSFKKIV) are compositionally biased toward basic and acidic residues. Ser-3443 is subject to Phosphoserine. 2 positions are modified to phosphothreonine: Thr-3447 and Thr-3474. Positions 3474 to 3483 (TDDEDQDEWD) are enriched in acidic residues. A compositionally biased stretch (polar residues) spans 3574 to 3585 (DTQSPQYLSATS). Phosphoserine occurs at positions 3577, 3585, 3615, 3619, 3625, 3628, 3631, 3652, 3678, 3680, and 3686. Disordered stretches follow at residues 3652-3746 (SPQK…MGTV) and 3833-3908 (YMSD…QQSH). 2 stretches are compositionally biased toward polar residues: residues 3701–3716 (EGYT…SSGA) and 3733–3745 (STGT…TMGT). Ser-3835 carries the phosphoserine modification. The span at 3845 to 3857 (TRIESQHGIERPR) shows a compositional bias: basic and acidic residues. A compositionally biased stretch (polar residues) spans 3859-3908 (APQTEFSQFIPPQTQTESQLVPPTSPYTQYQYSSPALPTQAPTSYTQQSH). 2 positions are modified to phosphoserine: Ser-4088 and Ser-4204. The disordered stretch occupies residues 4278-4301 (EADKPYSSGSRSRPSSRPSSVYGL). The segment covering 4282-4301 (PYSSGSRSRPSSRPSSVYGL) has biased composition (low complexity). 5 positions are modified to phosphoserine: Ser-4358, Ser-4362, Ser-4365, Ser-4394, and Ser-4430. The disordered stretch occupies residues 4389-4411 (RDQFGSSHSLPEVQQHMREESRT). A PDZ domain is found at 4496–4590 (RIKITRDSKD…EAEICVRLDL (95 aa)). 2 disordered regions span residues 4597–4618 (ENSQ…KSPG) and 4645–4690 (EKGS…TKVV). A compositionally biased stretch (basic and acidic residues) spans 4598 to 4615 (NSQHLELHEPPKAVDKAK). The segment covering 4652–4673 (SGPTSAGSSSVPSPGQPGSPSV) has biased composition (low complexity). Ser-4664 bears the Phosphoserine mark. Residues 4694–4823 (ITGEIQLQIN…SHLDNTPRWY (130 aa)) enclose the C2 1 domain. Positions 4723 and 4729 each coordinate Ca(2+). Ser-4778 carries the post-translational modification Phosphoserine. The Ca(2+) site is built by Asp-4793, Asp-4795, Ser-4798, and Asp-4801. 2 disordered regions span residues 4830–4907 (ESID…VTQT) and 4930–4986 (PTKP…QNGQ). Composition is skewed to low complexity over residues 4838–4853 (HSSQ…SVIK) and 4877–4887 (SSPGSSKSSSE). A compositionally biased stretch (polar residues) spans 4895–4907 (PSRSQSKTSVTQT). The segment covering 4941 to 4965 (SSVSTGSSGSSFGSGYSVDSEGSSS) has biased composition (low complexity). Residues 5007–5132 (VMGEIKIALK…DLRKRIVNWH (126 aa)) enclose the C2 2 domain.

In terms of assembly, interacts with BSN, ERC2/CAST1, RIMS1 and UNC13A. Interacts (via C-terminus) with TRIO (via N-terminus). Interacts with CTBP1. Interacts with SIAH1; this interaction negatively regulates SIAH1 E3 ligase activity. Directly interacts with GIT1 and GIT2. Ca(2+) is required as a cofactor. As to expression, moderately expressed in the developing cerebral cortex.

The protein localises to the presynaptic active zone. In terms of biological role, scaffold protein of the presynaptic cytomatrix at the active zone (CAZ) which is the place in the synapse where neurotransmitter is released. After synthesis, participates in the formation of Golgi-derived membranous organelles termed Piccolo-Bassoon transport vesicles (PTVs) that are transported along axons to sites of nascent synaptic contacts. At the presynaptic active zone, regulates the spatial organization of synaptic vesicle cluster, the protein complexes that execute membrane fusion and compensatory endocytosis. Organizes as well the readily releasable pool of synaptic vesicles and safeguards a fraction of them to be not immediately available for action potential-induced release. Also functions in processes other than assembly such as the regulation of specific presynaptic protein ubiquitination by interacting with SIAH1 or the regulation of presynaptic autophagy. Also mediates synapse to nucleus communication leading to reconfiguration of gene expression by associating with the transcriptional corepressor CTBP1 and by subsequently reducing the size of its pool available for nuclear import. This Homo sapiens (Human) protein is Protein piccolo.